Reading from the N-terminus, the 255-residue chain is MPATDRFSDRATLARSVRLLTAFRFEQSAPDRFYGALADDTVAMVGDLWESATGESQAGLTLLDVGGGPGYFASAFTAAGVNYIGVEPDPREMHAAAALTHERAGTFVRASGTALPFADDSVDVCLSSNVAEHVAQPWRLGDEMLRVTRPGGLAVLSYTVWLGPFGGHEMGLTHYLGGRRAAEMYTRRHGHRPKNDYGSSLFAVHARDGLRWAQGTGALLAAFPRYHPRWAWGLTKVPGLREFLVSNLVLVLRPC.

The protein belongs to the methyltransferase superfamily.

This is an uncharacterized protein from Mycolicibacterium vanbaalenii (strain DSM 7251 / JCM 13017 / BCRC 16820 / KCTC 9966 / NRRL B-24157 / PYR-1) (Mycobacterium vanbaalenii).